The following is a 338-amino-acid chain: GTPase Obg (338 aa).

Residues 1–159 form the Obg domain; the sequence is MQFIDEVKIH…RWLRLELKLM (159 aa). Residues 66-91 are disordered; it reads KAGRGKNGMGKDRHGANGDDLTIPVP. The OBG-type G domain occupies 160–331; sequence ADVGLLGFPN…LLDEIARHLW (172 aa). GTP contacts are provided by residues 166–173, 191–195, 213–216, 283–286, and 312–314; these read GFPNVGKS, FTTIK, DIPG, NKID, and SAA. 2 residues coordinate Mg(2+): Ser-173 and Thr-193.

This sequence belongs to the TRAFAC class OBG-HflX-like GTPase superfamily. OBG GTPase family. As to quaternary structure, monomer. Mg(2+) is required as a cofactor.

It localises to the cytoplasm. Its function is as follows. An essential GTPase which binds GTP, GDP and possibly (p)ppGpp with moderate affinity, with high nucleotide exchange rates and a fairly low GTP hydrolysis rate. Plays a role in control of the cell cycle, stress response, ribosome biogenesis and in those bacteria that undergo differentiation, in morphogenesis control. The sequence is that of GTPase Obg from Geobacter metallireducens (strain ATCC 53774 / DSM 7210 / GS-15).